The sequence spans 415 residues: Corticotropin-releasing factor receptor 1 (415 aa).

The first 24 residues, 1–24 (MLLAKTPCLLLVQVIAAGISFALT), serve as a signal peptide directing secretion. Residues 25 to 111 (SLQDQCETLQ…CQEILKQEKK (87 aa)) lie on the Extracellular side of the membrane. 3 cysteine pairs are disulfide-bonded: Cys-30-Cys-54, Cys-44-Cys-87, and Cys-68-Cys-102. N-linked (GlcNAc...) asparagine glycosylation is found at Asn-38, Asn-45, Asn-78, and Asn-90. Residues 112–142 (TKVHYHIAIVINFLGHSISLCALLVAFILFL) form a helical membrane-spanning segment. The Cytoplasmic segment spans residues 143 to 149 (RLRSIRC). The helical transmembrane segment at 150–174 (LRNIIHWNLITAFILRNVTWFVMQL) threads the bilayer. Residues 175–189 (TLSHEAHDSNVVWCR) lie on the Extracellular side of the membrane. Cys-188 and Cys-258 are disulfide-bonded. A helical transmembrane segment spans residues 190–218 (LVTIAHNYFYVTNFFWMFGEGCYLHTAIV). Residues 219–225 (LTYSTDK) lie on the Cytoplasmic side of the membrane. A helical membrane pass occupies residues 226–253 (LRKWMFICIGWCIPFPIIVAWAIGKLYY). Over 254-269 (DNEKCWFGKKAGVYTD) the chain is Extracellular. A helical transmembrane segment spans residues 270–295 (FIYQGPVILVLLINFIFLFNIVRILM). At 296–306 (TKLRASTTSET) the chain is on the cytoplasmic side. A helical membrane pass occupies residues 307–331 (IQYRKAVKATLVLLPLLGITYMLFF). At 332 to 338 (VTPGEDE) the chain is on the extracellular side. The chain crosses the membrane as a helical span at residues 339-368 (ISRIVFIYFNSFLQSFQGFFVSVFYCFLNS). Residues 369-415 (EVRSAVRKRWHRWQDKHSIRARVARAMSIPTSPTRISFHSIKQSSAI) are Cytoplasmic-facing.

The protein belongs to the G-protein coupled receptor 2 family. In terms of assembly, interacts (via N-terminal extracellular domain) with CRF and UCN.

It localises to the cell membrane. Its function is as follows. G-protein coupled receptor for CRH (corticotropin-releasing factor) and UCN (urocortin). Has high affinity for CRH and UCN. Ligand binding causes a conformation change that triggers signaling via guanine nucleotide-binding proteins (G proteins) and down-stream effectors, such as adenylate cyclase. Promotes the activation of adenylate cyclase, leading to increased intracellular cAMP levels. The chain is Corticotropin-releasing factor receptor 1 (crhr1) from Xenopus laevis (African clawed frog).